The sequence spans 123 residues: Gamma-synuclein (123 aa).

2 consecutive repeat copies span residues 20 to 30 and 31 to 41. The interval 20-67 is 4 X 11 AA tandem repeats of [EGSA]-K-T-K-[EQ]-[GQ]-V-X(4); that stretch reads EKTKQGVTEAAEKTKEGVMYVGTKTKGERGTSVTSVAEKTKEQANAVS. The 3; approximate repeat unit spans residues 42-56; sequence TKTKGERGTSVTSVA. Repeat unit 4 spans residues 57–67; the sequence is EKTKEQANAVS. Phosphoserine is present on residues Ser67 and Ser72. Positions 93 to 123 are disordered; the sequence is GVVRKEDLEPPAQDQEAKEQEEGEEAKSGGD. The span at 107–123 shows a compositional bias: basic and acidic residues; it reads QEAKEQEEGEEAKSGGD. Ser120 bears the Phosphoserine; by BARK1, CaMK2 and CK2 mark.

The protein belongs to the synuclein family. As to quaternary structure, may be a centrosome-associated protein. Interacts with MYOC; affects its secretion and its aggregation. Post-translationally, phosphorylated. Phosphorylation by GRK5 appears to occur on residues distinct from the residue phosphorylated by other kinases. In terms of tissue distribution, specifically expressed in the peripheral nervous system. High expression in motoneurons of the brainstem. Also found in neurons of many other brain regions including the cerebellar cortex, thalamus, hypothalamus and CA1, CA2, CA3 and CA4 regions of the hippocampus.

Its subcellular location is the cytoplasm. It is found in the perinuclear region. It localises to the cytoskeleton. The protein resides in the microtubule organizing center. The protein localises to the centrosome. Its subcellular location is the spindle. Functionally, plays a role in neurofilament network integrity. May be involved in modulating axonal architecture during development and in the adult. In vitro, increases the susceptibility of neurofilament-H to calcium-dependent proteases. May also function in modulating the keratin network in skin. Activates the MAPK and Elk-1 signal transduction pathway. This chain is Gamma-synuclein (Sncg), found in Rattus norvegicus (Rat).